A 510-amino-acid polypeptide reads, in one-letter code: UDP-N-acetylmuramoylalanine--D-glutamate ligase (510 aa).

An ATP-binding site is contributed by 138–144 (GTNGKTT). The segment at 294-316 (FDEPAPAPRRKKDAPPPTRAGGR) is disordered.

It belongs to the MurCDEF family.

Its subcellular location is the cytoplasm. The catalysed reaction is UDP-N-acetyl-alpha-D-muramoyl-L-alanine + D-glutamate + ATP = UDP-N-acetyl-alpha-D-muramoyl-L-alanyl-D-glutamate + ADP + phosphate + H(+). It participates in cell wall biogenesis; peptidoglycan biosynthesis. Cell wall formation. Catalyzes the addition of glutamate to the nucleotide precursor UDP-N-acetylmuramoyl-L-alanine (UMA). The chain is UDP-N-acetylmuramoylalanine--D-glutamate ligase from Bordetella bronchiseptica (strain ATCC BAA-588 / NCTC 13252 / RB50) (Alcaligenes bronchisepticus).